Reading from the N-terminus, the 478-residue chain is UDP-N-acetylmuramate--L-alanine ligase (478 aa).

122–128 (GTHGKTT) contacts ATP.

Belongs to the MurCDEF family.

It is found in the cytoplasm. It carries out the reaction UDP-N-acetyl-alpha-D-muramate + L-alanine + ATP = UDP-N-acetyl-alpha-D-muramoyl-L-alanine + ADP + phosphate + H(+). It functions in the pathway cell wall biogenesis; peptidoglycan biosynthesis. Its function is as follows. Cell wall formation. This chain is UDP-N-acetylmuramate--L-alanine ligase, found in Stenotrophomonas maltophilia (strain K279a).